We begin with the raw amino-acid sequence, 288 residues long: 4-hydroxy-3-methylbut-2-enyl diphosphate reductase (288 aa).

Position 13 (C13) interacts with [4Fe-4S] cluster. H41 and H75 together coordinate (2E)-4-hydroxy-3-methylbut-2-enyl diphosphate. Residues H41 and H75 each contribute to the dimethylallyl diphosphate site. Residues H41 and H75 each coordinate isopentenyl diphosphate. C97 provides a ligand contact to [4Fe-4S] cluster. A (2E)-4-hydroxy-3-methylbut-2-enyl diphosphate-binding site is contributed by H130. Dimethylallyl diphosphate is bound at residue H130. H130 contacts isopentenyl diphosphate. Catalysis depends on E132, which acts as the Proton donor. Residue T168 participates in (2E)-4-hydroxy-3-methylbut-2-enyl diphosphate binding. C199 is a binding site for [4Fe-4S] cluster. S227, S228, N229, and S271 together coordinate (2E)-4-hydroxy-3-methylbut-2-enyl diphosphate. S227, S228, N229, and S271 together coordinate dimethylallyl diphosphate. Isopentenyl diphosphate contacts are provided by S227, S228, N229, and S271.

Belongs to the IspH family. [4Fe-4S] cluster serves as cofactor.

It carries out the reaction isopentenyl diphosphate + 2 oxidized [2Fe-2S]-[ferredoxin] + H2O = (2E)-4-hydroxy-3-methylbut-2-enyl diphosphate + 2 reduced [2Fe-2S]-[ferredoxin] + 2 H(+). The catalysed reaction is dimethylallyl diphosphate + 2 oxidized [2Fe-2S]-[ferredoxin] + H2O = (2E)-4-hydroxy-3-methylbut-2-enyl diphosphate + 2 reduced [2Fe-2S]-[ferredoxin] + 2 H(+). Its pathway is isoprenoid biosynthesis; dimethylallyl diphosphate biosynthesis; dimethylallyl diphosphate from (2E)-4-hydroxy-3-methylbutenyl diphosphate: step 1/1. It participates in isoprenoid biosynthesis; isopentenyl diphosphate biosynthesis via DXP pathway; isopentenyl diphosphate from 1-deoxy-D-xylulose 5-phosphate: step 6/6. Catalyzes the conversion of 1-hydroxy-2-methyl-2-(E)-butenyl 4-diphosphate (HMBPP) into a mixture of isopentenyl diphosphate (IPP) and dimethylallyl diphosphate (DMAPP). Acts in the terminal step of the DOXP/MEP pathway for isoprenoid precursor biosynthesis. This is 4-hydroxy-3-methylbut-2-enyl diphosphate reductase from Phocaeicola vulgatus (strain ATCC 8482 / DSM 1447 / JCM 5826 / CCUG 4940 / NBRC 14291 / NCTC 11154) (Bacteroides vulgatus).